A 365-amino-acid polypeptide reads, in one-letter code: tRNA-specific 2-thiouridylase MnmA (365 aa).

ATP is bound by residues alanine 6 to serine 13 and leucine 32. The active-site Nucleophile is the cysteine 101. Cysteines 101 and 199 form a disulfide. Residue glycine 125 coordinates ATP. An interaction with tRNA region spans residues lysine 149–glutamine 151. The Cysteine persulfide intermediate role is filled by cysteine 199.

This sequence belongs to the MnmA/TRMU family.

The protein localises to the cytoplasm. It carries out the reaction S-sulfanyl-L-cysteinyl-[protein] + uridine(34) in tRNA + AH2 + ATP = 2-thiouridine(34) in tRNA + L-cysteinyl-[protein] + A + AMP + diphosphate + H(+). Its function is as follows. Catalyzes the 2-thiolation of uridine at the wobble position (U34) of tRNA, leading to the formation of s(2)U34. In Corynebacterium efficiens (strain DSM 44549 / YS-314 / AJ 12310 / JCM 11189 / NBRC 100395), this protein is tRNA-specific 2-thiouridylase MnmA.